The chain runs to 633 residues: Sodium- and chloride-dependent glycine transporter 1 (633 aa).

The Cytoplasmic portion of the chain corresponds to M1 to E30. 3 consecutive transmembrane segments (helical) span residues F31–L51, G58–M78, and Y113–M133. The Extracellular segment spans residues N134–E208. Residues N158, N164, N173, and N179 are each glycosylated (N-linked (GlcNAc...) asparagine). Transmembrane regions (helical) follow at residues V209–I229, V238–I258, V283–I303, S330–V350, L373–L393, I429–L449, Y453–I473, L493–F513, and I533–F553. Topologically, residues K554–V633 are cytoplasmic. The interval R588–V633 is disordered. Composition is skewed to polar residues over residues Q591–E602 and L617–V633.

Belongs to the sodium:neurotransmitter symporter (SNF) (TC 2.A.22) family. SLC6A9 subfamily. First expressed in early tailbud stage embryos in the midbrain and anterior spinal cord, and weakly in the hindbrain. By late tailbud stages, expression extends posteriorly in the spinal cord to appear in between somites. Expressed in the forebrain, retina, between the somites and in the blood islands by the swimming tadpole stages.

It is found in the cell membrane. It carries out the reaction glycine(out) + chloride(out) + 2 Na(+)(out) = glycine(in) + chloride(in) + 2 Na(+)(in). In terms of biological role, sodium- and chloride-dependent glycine transporter which is essential for regulating glycine concentrations at inhibitory glycinergic synapses. The sequence is that of Sodium- and chloride-dependent glycine transporter 1 from Xenopus laevis (African clawed frog).